Consider the following 570-residue polypeptide: Double-stranded RNA-binding protein Staufen homolog 2 (570 aa).

The DRBM 1 domain maps to 8–75 (TAMCLVNELA…ANKALTESTL (68 aa)). Disordered stretches follow at residues 71 to 94 (TEST…PGSI) and 181 to 203 (NEPI…DDKD). Positions 83–94 (PKSNVNNNPGSI) are enriched in polar residues. The DRBM 2 domain maps to 95-181 (TPTVELNGLA…AMKALQALQN (87 aa)). Position 188 is a phosphoserine (Ser-188). Residues 194 to 203 (SGKDVDDDKD) are compositionally biased toward basic and acidic residues. 2 DRBM domains span residues 207-274 (SEIS…ELKK) and 307-375 (NPIS…QLGY). 2 consecutive short sequence motifs (nuclear localization signal) follow at residues 273–291 (KKLP…FKKR) and 373–412 (LGYK…PKGI). Residues 381–570 (LQDQLEKTGE…QDCKKSNSAV (190 aa)) are required for dendritic transport. Positions 387 to 409 (KTGENKGWSGPKPGFPEPTNNTP) are disordered. At Ser-395 the chain carries Phosphoserine. Thr-405 bears the Phosphothreonine mark. Residues Ser-416, Ser-426, Ser-440, Ser-455, and Ser-492 each carry the phosphoserine modification. Positions 528–570 (DGAMNIEKGSLEKQAKHLREKADNNQAPPGSIAQDCKKSNSAV) are disordered. The span at 536–550 (GSLEKQAKHLREKAD) shows a compositional bias: basic and acidic residues.

Interacts with the exportin XPO5. This requires RNA and RAN bound to GTP. Interacts with microtubules. Isoform 2 and isoform 3 may also interact with ribosomes, and this association is independent of translation. Identified in a mRNP complex, at least composed of DHX9, DDX3X, ELAVL1, HNRNPU, IGF2BP1, ILF3, PABPC1, PCBP2, PTBP2, STAU1, STAU2, SYNCRIP and YBX1. Interacts with TRIM71 (via NHL repeats) in an RNA-dependent manner.

It is found in the cytoplasm. Its subcellular location is the nucleus. The protein localises to the nucleolus. The protein resides in the endoplasmic reticulum. RNA-binding protein required for the microtubule-dependent transport of neuronal RNA from the cell body to the dendrite. As protein synthesis occurs within the dendrite, the localization of specific mRNAs to dendrites may be a prerequisite for neurite outgrowth and plasticity at sites distant from the cell body. This is Double-stranded RNA-binding protein Staufen homolog 2 (STAU2) from Homo sapiens (Human).